The following is a 509-amino-acid chain: Lysine--tRNA ligase (509 aa).

Residues Glu419 and Glu426 each contribute to the Mg(2+) site.

Belongs to the class-II aminoacyl-tRNA synthetase family. As to quaternary structure, homodimer. It depends on Mg(2+) as a cofactor.

The protein resides in the cytoplasm. It carries out the reaction tRNA(Lys) + L-lysine + ATP = L-lysyl-tRNA(Lys) + AMP + diphosphate. In Methylobacillus flagellatus (strain ATCC 51484 / DSM 6875 / VKM B-1610 / KT), this protein is Lysine--tRNA ligase.